Consider the following 245-residue polypeptide: Carboxymethylenebutenolidase homolog (245 aa).

An N-acetylalanine modification is found at A2. Active-site residues include C132, D179, and H212. The residue at position 223 (S223) is a Phosphoserine.

This sequence belongs to the dienelactone hydrolase family.

It localises to the cytoplasm. Its subcellular location is the cytosol. Its function is as follows. Cysteine hydrolase. This Rattus norvegicus (Rat) protein is Carboxymethylenebutenolidase homolog (Cmbl).